The sequence spans 449 residues: MITLKQAMELAPQALSEIKTEIRKKVSESSLNAYVGEIRDSLEGGIPILVKDNINVKGSELTCGSKILEGYVAPYNATVIEKLHAQGMSAFGRSNMDEFAMGSTTESSAHGKTLNPVDSSRVPGGSSGGSASAVAGGLAIAALGSDTGGSIRQPAAFCGCVGLKPTYGRVSRYGLVAYASSLDQIGPITQNVEDAAILFDAISGHDGRDSTSASLAPTQTHKALDANKKQTIAILPDLLKEASKPIQEAYFETVKILESEGHKIVEKSMLNTAYHISAYYVLCTAEASSNLARFDGVRYGRRAEAQNLKELYIKSRTEGFGEEVKRRILLGSFVLSSGYYDAYYLKAQKVRHLIKNQYDEIFKDCDLVLSPVAPTVAPKFGSTSTPLEMYLGDIYTISINLAGLPALSLPVGKSEEGLPVGMQLIGKAFGEQSVLDGALSLERAIGFAL.

Catalysis depends on charge relay system residues Lys-51 and Ser-126. Residues 103–128 (STTESSAHGKTLNPVDSSRVPGGSSG) form a disordered region. A compositionally biased stretch (low complexity) spans 119–128 (SSRVPGGSSG). Residue Ser-150 is the Acyl-ester intermediate of the active site.

This sequence belongs to the amidase family. GatA subfamily. As to quaternary structure, heterotrimer of A, B and C subunits.

It carries out the reaction L-glutamyl-tRNA(Gln) + L-glutamine + ATP + H2O = L-glutaminyl-tRNA(Gln) + L-glutamate + ADP + phosphate + H(+). Its function is as follows. Allows the formation of correctly charged Gln-tRNA(Gln) through the transamidation of misacylated Glu-tRNA(Gln) in organisms which lack glutaminyl-tRNA synthetase. The reaction takes place in the presence of glutamine and ATP through an activated gamma-phospho-Glu-tRNA(Gln). The polypeptide is Glutamyl-tRNA(Gln) amidotransferase subunit A (Wolinella succinogenes (strain ATCC 29543 / DSM 1740 / CCUG 13145 / JCM 31913 / LMG 7466 / NCTC 11488 / FDC 602W) (Vibrio succinogenes)).